The chain runs to 182 residues: Dual-action ribosomal maturation protein DarP (182 aa).

It belongs to the DarP family.

The protein resides in the cytoplasm. Its function is as follows. Member of a network of 50S ribosomal subunit biogenesis factors which assembles along the 30S-50S interface, preventing incorrect 23S rRNA structures from forming. Promotes peptidyl transferase center (PTC) maturation. This chain is Dual-action ribosomal maturation protein DarP, found in Yersinia pestis.